The following is a 167-amino-acid chain: SFIGATTLMIAHGLTSSLLFCLANTNYERVHSRTMALARGLQTLLPLAATWWLLASLTNLALPPTINLIGELSVMMAAFSWSHLTIILVGLNTLITALYSLYMLIMTQRGKYTYHINNIMPPFTRENTLMIMHLFPLILLSTNPKLIMGTMYCKYSLNKTLDCESNN.

The next 3 membrane-spanning stretches (helical) occupy residues 2–22, 44–64, and 86–106; these read FIGATTLMIAHGLTSSLLFCL, LLPLAATWWLLASLTNLALPP, and IILVGLNTLITALYSLYMLIM.

The protein belongs to the complex I subunit 4 family.

The protein resides in the mitochondrion membrane. It carries out the reaction a ubiquinone + NADH + 5 H(+)(in) = a ubiquinol + NAD(+) + 4 H(+)(out). Functionally, core subunit of the mitochondrial membrane respiratory chain NADH dehydrogenase (Complex I) that is believed to belong to the minimal assembly required for catalysis. Complex I functions in the transfer of electrons from NADH to the respiratory chain. The immediate electron acceptor for the enzyme is believed to be ubiquinone. The chain is NADH-ubiquinone oxidoreductase chain 4 (MT-ND4) from Carlito syrichta (Philippine tarsier).